Here is an 812-residue protein sequence, read N- to C-terminus: Probable inorganic carbon transporter subunit DabA (812 aa).

Cys-337, Asp-339, His-499, and Cys-514 together coordinate Zn(2+).

It belongs to the inorganic carbon transporter (TC 9.A.2) DabA family. In terms of assembly, forms a complex with DabB. It depends on Zn(2+) as a cofactor.

It is found in the cell inner membrane. Its function is as follows. Part of an energy-coupled inorganic carbon pump. This chain is Probable inorganic carbon transporter subunit DabA, found in Xanthomonas euvesicatoria pv. vesicatoria (strain 85-10) (Xanthomonas campestris pv. vesicatoria).